The chain runs to 63 residues: Translational regulator CsrA (63 aa).

It belongs to the CsrA/RsmA family. Homodimer; the beta-strands of each monomer intercalate to form a hydrophobic core, while the alpha-helices form wings that extend away from the core.

The protein localises to the cytoplasm. In terms of biological role, a key translational regulator that binds mRNA to regulate translation initiation and/or mRNA stability. Mediates global changes in gene expression, shifting from rapid growth to stress survival by linking envelope stress, the stringent response and the catabolite repression systems. Usually binds in the 5'-UTR; binding at or near the Shine-Dalgarno sequence prevents ribosome-binding, repressing translation, binding elsewhere in the 5'-UTR can activate translation and/or stabilize the mRNA. Its function is antagonized by small RNA(s). This chain is Translational regulator CsrA, found in Alteromonas mediterranea (strain DSM 17117 / CIP 110805 / LMG 28347 / Deep ecotype).